Here is a 460-residue protein sequence, read N- to C-terminus: ATP synthase subunit beta (460 aa).

150-157 (GGAGVGKT) is a binding site for ATP.

It belongs to the ATPase alpha/beta chains family. In terms of assembly, F-type ATPases have 2 components, CF(1) - the catalytic core - and CF(0) - the membrane proton channel. CF(1) has five subunits: alpha(3), beta(3), gamma(1), delta(1), epsilon(1). CF(0) has three main subunits: a(1), b(2) and c(9-12). The alpha and beta chains form an alternating ring which encloses part of the gamma chain. CF(1) is attached to CF(0) by a central stalk formed by the gamma and epsilon chains, while a peripheral stalk is formed by the delta and b chains.

It localises to the cell inner membrane. The enzyme catalyses ATP + H2O + 4 H(+)(in) = ADP + phosphate + 5 H(+)(out). Functionally, produces ATP from ADP in the presence of a proton gradient across the membrane. The catalytic sites are hosted primarily by the beta subunits. The sequence is that of ATP synthase subunit beta from Photorhabdus laumondii subsp. laumondii (strain DSM 15139 / CIP 105565 / TT01) (Photorhabdus luminescens subsp. laumondii).